Consider the following 182-residue polypeptide: Bis(5'-nucleosyl)-tetraphosphatase [asymmetrical] (182 aa).

An HIT domain is found at 3–110 (KQLYFSKFPV…IPRKKADFSE (108 aa)). Substrate contacts are provided by residues N28, Q84, and 90–93 (GQTV). The short motif at 95–99 (HVHVH) is the Histidine triad motif element. H97 serves as the catalytic Tele-AMP-histidine intermediate. Position 99 (H99) interacts with substrate. A disordered region spans residues 135 to 161 (RYAGDERPPTSMRQAIPKDEDRKPRTL). Positions 150 to 161 (IPKDEDRKPRTL) are enriched in basic and acidic residues.

It catalyses the reaction P(1),P(4)-bis(5'-guanosyl) tetraphosphate + H2O = GMP + GTP + 2 H(+). In terms of biological role, asymmetrically hydrolyzes Ap4A to yield AMP and ATP. In Schizosaccharomyces pombe (strain 972 / ATCC 24843) (Fission yeast), this protein is Bis(5'-nucleosyl)-tetraphosphatase [asymmetrical] (aph1).